Reading from the N-terminus, the 176-residue chain is Protein KleF (176 aa).

The chain is Protein KleF (kleF) from Escherichia coli.